A 798-amino-acid polypeptide reads, in one-letter code: ATP-dependent RNA helicase bel (798 aa).

The tract at residues 16–248 (VAGLDLNGGS…SRWKEGGGSN (233 aa)) is disordered. Residues 31-42 (PITSKTSTNSVT) show a composition bias toward polar residues. Composition is skewed to gly residues over residues 94–110 (RGGGGEYRRGGGGGGRG), 118–132 (YGYGSGGGGRRGGGG), and 154–178 (SGGGGGGGRGFGRGPSYRGGGGGSG). 2 positions are modified to phosphoserine: S177 and S179. Over residues 198-209 (RNDRWQEPERPA) the composition is skewed to basic and acidic residues. 2 positions are modified to phosphoserine: S214 and S219. Residues 295 to 323 (TSFDDVQLTEIIRNNVALARYDKPTPVQK) carry the Q motif motif. Residues 315-322 (YDKPTPVQ) and 339-346 (AQTGSGKT) each bind ATP. Residues 326-515 (IPIIINGRDL…SDFLSNYIFL (190 aa)) enclose the Helicase ATP-binding domain. The DEAD box motif lies at 459–462 (DEAD). The Helicase C-terminal domain maps to 542–693 (YLLDLLSSIR…EIPSFMEDMS (152 aa)). S638 is subject to Phosphoserine. 2 disordered regions span residues 689-765 (MEDM…SGGG) and 778-798 (GGSYGGGSASHSSNAPDWWAQ). Gly residues-rich tracts occupy residues 706 to 717 (RGGGGRYGGGFG) and 740 to 750 (GGSGSGGGGGS).

Belongs to the DEAD box helicase family. DDX3/DED1 subfamily. Vas and bel colocalize in nuage (perinuclear, electron-dense granules in germline cells) and at the oocyte posterior during oogenesis.

Its subcellular location is the cytoplasm. The catalysed reaction is ATP + H2O = ADP + phosphate + H(+). Its function is as follows. ATP-dependent RNA helicase that is essential and required for cellular function, larval growth, and for male and female fertility. Also required for RNA interference (RNAi), double-stranded RNA induces potent and specific gene silencing, by acting downstream of dsRNA internalization. RNAi is mediated by the RNA-induced silencing complex (RISC), a sequence-specific, multicomponent nuclease that destroys or silences messenger RNAs homologous to the silencing trigger. This Drosophila melanogaster (Fruit fly) protein is ATP-dependent RNA helicase bel.